A 242-amino-acid polypeptide reads, in one-letter code: Myogenic factor 6 (242 aa).

A disordered region spans residues 31–63 (SPLYPGSDGTLSPCQDQMPQEAGSDSSGEEHVL). The span at 39-56 (GTLSPCQDQMPQEAGSDS) shows a compositional bias: polar residues. The 52-residue stretch at 93–144 (DRRKAATLRERRRLKKINEAFEALKRRTVANPNQRLPKVEILRSAISYIERL) folds into the bHLH domain.

As to quaternary structure, efficient DNA binding requires dimerization with another bHLH protein. Interacts with CSRP3. In terms of tissue distribution, skeletal muscle.

It localises to the nucleus. Functionally, involved in muscle differentiation (myogenic factor). Induces fibroblasts to differentiate into myoblasts. Probable sequence specific DNA-binding protein. The polypeptide is Myogenic factor 6 (Myf6) (Mus musculus (Mouse)).